Consider the following 405-residue polypeptide: Acetylornithine aminotransferase 1 (405 aa).

Residues 108-109 (GA) and Phe141 each bind pyridoxal 5'-phosphate. N(2)-acetyl-L-ornithine is bound at residue Arg144. 226-229 (DEVQ) contacts pyridoxal 5'-phosphate. Lys255 carries the post-translational modification N6-(pyridoxal phosphate)lysine. A N(2)-acetyl-L-ornithine-binding site is contributed by Thr283. Thr284 lines the pyridoxal 5'-phosphate pocket.

It belongs to the class-III pyridoxal-phosphate-dependent aminotransferase family. ArgD subfamily. As to quaternary structure, homodimer. Pyridoxal 5'-phosphate serves as cofactor.

Its subcellular location is the cytoplasm. The catalysed reaction is N(2)-acetyl-L-ornithine + 2-oxoglutarate = N-acetyl-L-glutamate 5-semialdehyde + L-glutamate. Its pathway is amino-acid biosynthesis; L-arginine biosynthesis; N(2)-acetyl-L-ornithine from L-glutamate: step 4/4. This is Acetylornithine aminotransferase 1 from Pseudomonas syringae pv. tomato (strain ATCC BAA-871 / DC3000).